Here is a 455-residue protein sequence, read N- to C-terminus: GTPase Der (455 aa).

2 consecutive EngA-type G domains span residues 3–167 (FTIA…PEPA) and 184–359 (IRVA…AVWN). Residues 9–16 (GRPNVGKS), 56–60 (DTAGL), 119–122 (NKSE), 190–197 (GRPNAGKS), 237–241 (DTAGL), and 302–305 (NKWD) contribute to the GTP site. One can recognise a KH-like domain in the interval 360–444 (RRVATALLNR…PIRITLREKA (85 aa)).

Belongs to the TRAFAC class TrmE-Era-EngA-EngB-Septin-like GTPase superfamily. EngA (Der) GTPase family. As to quaternary structure, associates with the 50S ribosomal subunit.

In terms of biological role, GTPase that plays an essential role in the late steps of ribosome biogenesis. This is GTPase Der from Nitrobacter winogradskyi (strain ATCC 25391 / DSM 10237 / CIP 104748 / NCIMB 11846 / Nb-255).